Here is a 137-residue protein sequence, read N- to C-terminus: ATP synthase epsilon chain, chloroplastic (137 aa).

It belongs to the ATPase epsilon chain family. As to quaternary structure, F-type ATPases have 2 components, CF(1) - the catalytic core - and CF(0) - the membrane proton channel. CF(1) has five subunits: alpha(3), beta(3), gamma(1), delta(1), epsilon(1). CF(0) has three main subunits: a, b and c.

It is found in the plastid. The protein resides in the chloroplast thylakoid membrane. Its function is as follows. Produces ATP from ADP in the presence of a proton gradient across the membrane. The polypeptide is ATP synthase epsilon chain, chloroplastic (Sorghum bicolor (Sorghum)).